A 218-amino-acid polypeptide reads, in one-letter code: MATSDHLARMRVEYGSAEKDGSVDLDADWLDIGWVALLNQWMTEAHDAGVAEPNAMVVATIDGEGRPVTRTVLCKSVDESGISFYTNYDSDKGAQLAARPYASATFPWYLLGRQVHVRGRVTKVSAEETADYWSKRPRGSQLGAWASQQSRPIASRAALMQQLADVTARFADVDEVPVPPHWGGYLIAAEVVEFWQGRENRVHNRIRVRDGAVERLQP.

Substrate-binding positions include 11–14 (RVEY) and Lys75. FMN-binding positions include 70–75 (RTVLCK), 85–86 (YT), Lys92, and Gln114. The substrate site is built by Tyr132, Arg136, and Ser140. FMN is bound by residues 149-150 (QS) and Trp195. Substrate is bound at residue 201–203 (RVH). Residue Arg205 participates in FMN binding.

This sequence belongs to the pyridoxamine 5'-phosphate oxidase family. Homodimer. FMN serves as cofactor.

The catalysed reaction is pyridoxamine 5'-phosphate + O2 + H2O = pyridoxal 5'-phosphate + H2O2 + NH4(+). It catalyses the reaction pyridoxine 5'-phosphate + O2 = pyridoxal 5'-phosphate + H2O2. Its pathway is cofactor metabolism; pyridoxal 5'-phosphate salvage; pyridoxal 5'-phosphate from pyridoxamine 5'-phosphate: step 1/1. It participates in cofactor metabolism; pyridoxal 5'-phosphate salvage; pyridoxal 5'-phosphate from pyridoxine 5'-phosphate: step 1/1. Its function is as follows. Catalyzes the oxidation of either pyridoxine 5'-phosphate (PNP) or pyridoxamine 5'-phosphate (PMP) into pyridoxal 5'-phosphate (PLP). This Mycolicibacterium gilvum (strain PYR-GCK) (Mycobacterium gilvum (strain PYR-GCK)) protein is Pyridoxine/pyridoxamine 5'-phosphate oxidase.